Consider the following 307-residue polypeptide: Ribonuclease Z (307 aa).

The Zn(2+) site is built by histidine 63, histidine 65, aspartate 67, histidine 68, histidine 141, aspartate 212, and histidine 270. The active-site Proton acceptor is the aspartate 67.

It belongs to the RNase Z family. As to quaternary structure, homodimer. Zn(2+) serves as cofactor.

It carries out the reaction Endonucleolytic cleavage of RNA, removing extra 3' nucleotides from tRNA precursor, generating 3' termini of tRNAs. A 3'-hydroxy group is left at the tRNA terminus and a 5'-phosphoryl group is left at the trailer molecule.. In terms of biological role, zinc phosphodiesterase, which displays some tRNA 3'-processing endonuclease activity. Probably involved in tRNA maturation, by removing a 3'-trailer from precursor tRNA. The protein is Ribonuclease Z of Bacillus cereus (strain B4264).